A 241-amino-acid polypeptide reads, in one-letter code: Nopaline transport system permease protein NocM (241 aa).

One can recognise an ABC transmembrane type-1 domain in the interval Val-17–Val-215. Helical transmembrane passes span Leu-21 to Met-41, Leu-52 to Ile-72, Pro-95 to Ile-115, Val-161 to Gly-181, and Tyr-191 to Val-211.

This sequence belongs to the binding-protein-dependent transport system permease family. HisMQ subfamily.

Its subcellular location is the cell inner membrane. Its function is as follows. Component of the nopaline active transport system probably consisting of four subunits: Q, M, P and T. This system is also capable of transporting octopine provided that catabolic functions are induced with nopaline. This chain is Nopaline transport system permease protein NocM (nocM), found in Agrobacterium fabrum (strain C58 / ATCC 33970) (Agrobacterium tumefaciens (strain C58)).